Consider the following 316-residue polypeptide: Pyridoxal 5'-phosphate synthase subunit PdxS (316 aa).

Residue aspartate 44 coordinates D-ribose 5-phosphate. Lysine 101 (schiff-base intermediate with D-ribose 5-phosphate) is an active-site residue. D-ribose 5-phosphate is bound at residue glycine 173. Lysine 185 lines the D-glyceraldehyde 3-phosphate pocket. D-ribose 5-phosphate contacts are provided by residues glycine 234 and 255–256; that span reads GS.

It belongs to the PdxS/SNZ family. In terms of assembly, in the presence of PdxT, forms a dodecamer of heterodimers.

It catalyses the reaction aldehydo-D-ribose 5-phosphate + D-glyceraldehyde 3-phosphate + L-glutamine = pyridoxal 5'-phosphate + L-glutamate + phosphate + 3 H2O + H(+). It functions in the pathway cofactor biosynthesis; pyridoxal 5'-phosphate biosynthesis. Catalyzes the formation of pyridoxal 5'-phosphate from ribose 5-phosphate (RBP), glyceraldehyde 3-phosphate (G3P) and ammonia. The ammonia is provided by the PdxT subunit. Can also use ribulose 5-phosphate and dihydroxyacetone phosphate as substrates, resulting from enzyme-catalyzed isomerization of RBP and G3P, respectively. This Sulfurisphaera tokodaii (strain DSM 16993 / JCM 10545 / NBRC 100140 / 7) (Sulfolobus tokodaii) protein is Pyridoxal 5'-phosphate synthase subunit PdxS.